The following is a 530-amino-acid chain: Metal transporter Nramp5 (530 aa).

The span at 1-10 (MTGSTVSRQE) shows a compositional bias: polar residues. Positions 1 to 53 (MTGSTVSRQENSPKRPNDSNGEFKRLLVPETSQPEEDELHESPPENQILNVEE) are disordered. Residues 11–27 (NSPKRPNDSNGEFKRLL) show a composition bias toward basic and acidic residues. A run of 12 helical transmembrane segments spans residues 65 to 85 (FSWA…IAFL), 98 to 118 (AVAG…GLLM), 147 to 167 (ILLW…EVIG), 179 to 199 (FLPI…ISYL), 207 to 227 (LEGL…WMFN), 253 to 273 (AVGV…SALV), 299 to 319 (AALF…AKGF), 341 to 361 (YGGG…AAGQ), 387 to 407 (LSAF…AIMF), 429 to 449 (IPFA…MGVF), 458 to 478 (LAWT…LDFF), and 485 to 505 (FLVG…IIYL).

The protein belongs to the NRAMP (TC 2.A.55) family.

It localises to the membrane. Seems to be involved in iron uptake. The protein is Metal transporter Nramp5 (NRAMP5) of Arabidopsis thaliana (Mouse-ear cress).